A 335-amino-acid polypeptide reads, in one-letter code: GTPase Obg (335 aa).

In terms of domain architecture, Obg spans 1 to 159 (MQFIDRSEIE…RKLLLELKLL (159 aa)). The OBG-type G domain maps to 160–328 (AEVGIIGLPN…LLARVWQVLE (169 aa)). Residues 166–173 (GLPNAGKS), 191–195 (FTTLV), 213–216 (DIPG), 280–283 (NKAD), and 309–311 (SAA) each bind GTP. Residues serine 173 and threonine 193 each coordinate Mg(2+).

This sequence belongs to the TRAFAC class OBG-HflX-like GTPase superfamily. OBG GTPase family. In terms of assembly, monomer. Mg(2+) is required as a cofactor.

The protein resides in the cytoplasm. In terms of biological role, an essential GTPase which binds GTP, GDP and possibly (p)ppGpp with moderate affinity, with high nucleotide exchange rates and a fairly low GTP hydrolysis rate. Plays a role in control of the cell cycle, stress response, ribosome biogenesis and in those bacteria that undergo differentiation, in morphogenesis control. The chain is GTPase Obg from Gloeobacter violaceus (strain ATCC 29082 / PCC 7421).